The following is a 452-amino-acid chain: Probable glycine dehydrogenase (decarboxylating) subunit 1 (452 aa).

It belongs to the GcvP family. N-terminal subunit subfamily. In terms of assembly, the glycine cleavage system is composed of four proteins: P, T, L and H. In this organism, the P 'protein' is a heterodimer of two subunits.

The enzyme catalyses N(6)-[(R)-lipoyl]-L-lysyl-[glycine-cleavage complex H protein] + glycine + H(+) = N(6)-[(R)-S(8)-aminomethyldihydrolipoyl]-L-lysyl-[glycine-cleavage complex H protein] + CO2. The glycine cleavage system catalyzes the degradation of glycine. The P protein binds the alpha-amino group of glycine through its pyridoxal phosphate cofactor; CO(2) is released and the remaining methylamine moiety is then transferred to the lipoamide cofactor of the H protein. The protein is Probable glycine dehydrogenase (decarboxylating) subunit 1 of Sphingopyxis alaskensis (strain DSM 13593 / LMG 18877 / RB2256) (Sphingomonas alaskensis).